The sequence spans 259 residues: Peroxisomal membrane protein 11B (259 aa).

The residue at position 43 (Lys43) is an N6-acetyllysine. Positions 211-259 are interaction with PEX19, PEX11G and FIS1 and peroxisome targeting; it reads VVRNACDLFIPLDKLGLWRCGPGIVGLCGLVSSILSILTLIYPWLRLKP. A helical transmembrane segment spans residues 234–254; the sequence is IVGLCGLVSSILSILTLIYPW.

The protein belongs to the peroxin-11 family. Homodimer. Heterodimer with PEX11G. Interacts with PEX19. Interacts with FIS1.

It is found in the peroxisome membrane. Its function is as follows. Involved in peroxisomal proliferation. May regulate peroxisome division by recruiting the dynamin-related GTPase DNM1L to the peroxisomal membrane. Promotes membrane protrusion and elongation on the peroxisomal surface. The protein is Peroxisomal membrane protein 11B (PEX11B) of Pongo abelii (Sumatran orangutan).